We begin with the raw amino-acid sequence, 569 residues long: F-box-like/WD repeat-containing protein TBL1X (569 aa).

The LisH domain maps to 55–87 (TSDEVNFLVYRYLQESGFSHSAFTFGIESHISQ). In terms of domain architecture, F-box-like spans 92–137 (GTLVPPAALISILQKGLQYVEAEISINEDGTVFDGRPIESLSLIDA). Lys-153 is modified (N6-acetyllysine). The interval 170–195 (TSASVSQQNPSKNREATVNGEENRAH) is disordered. Position 175 is a phosphoserine (Ser-175). WD repeat units follow at residues 222–261 (GHES…NGGS), 278–317 (PSNK…ASTL), 319–358 (QHKG…AKQQ), 361–401 (FHSA…KTFQ), 402–441 (GHTN…CIHD), 444–492 (AHNK…CTHT), 495–534 (KHQE…LVHS), and 536–568 (RGTG…LDLR). Residue Lys-332 forms a Glycyl lysine isopeptide (Lys-Gly) (interchain with G-Cter in SUMO2) linkage.

The protein belongs to the WD repeat EBI family. In terms of assembly, homotetramer; dimer of dimers. Component of the N-Cor repressor complex, at least composed of NCOR1, NCOR2, HDAC3, TBL1X, TBL1R, CORO2A and GPS2. Interacts with GPS2 (when sumoylated); leading to protect GPS2 against degradation by the proteasome. Component of a E3 ubiquitin ligase complex containing UBE2D1, SIAH1, CACYBP/SIP, SKP1, APC and TBL1X. Probably part of other corepressor complexes, that do not contain NCOR1 and NCOR2. Interacts with histones H2B, H3a and H4. Interacts with MECP2; recruits TBL1X to the heterochromatin foci. Interacts with USP44.

It is found in the nucleus. Functionally, F-box-like protein involved in the recruitment of the ubiquitin/19S proteasome complex to nuclear receptor-regulated transcription units. Plays an essential role in transcription activation mediated by nuclear receptors. Probably acts as integral component of corepressor complexes that mediates the recruitment of the 19S proteasome complex, leading to the subsequent proteasomal degradation of transcription repressor complexes, thereby allowing cofactor exchange. The polypeptide is F-box-like/WD repeat-containing protein TBL1X (TBL1X) (Macaca fascicularis (Crab-eating macaque)).